Here is a 1412-residue protein sequence, read N- to C-terminus: uncharacterized protein (1412 aa).

The tract at residues 1-22 is disordered; sequence MESINVVNSVEDLPGFNPDENV. Coiled-coil stretches lie at residues 317-377 and 732-800; these read NNDF…ILRH and SKEA…SDDE. A disordered region spans residues 778–808; the sequence is SRKRKHEDIVKEHEAEKRDSDDEDDFEEVDV. Over residues 783-797 the composition is skewed to basic and acidic residues; it reads HEDIVKEHEAEKRDS. Over residues 798–808 the composition is skewed to acidic residues; the sequence is DDEDDFEEVDV.

This is an uncharacterized protein from Magallana gigas (Pacific oyster).